We begin with the raw amino-acid sequence, 391 residues long: Probable protein arginine N-methyltransferase 6.1 (391 aa).

The interval Met1–Ala35 is disordered. A compositionally biased stretch (low complexity) spans Ser20–Ala35. The 347-residue stretch at Asp45 to Arg391 folds into the SAM-dependent MTase PRMT-type domain. S-adenosyl-L-methionine-binding residues include His58, Arg67, Gly91, Glu113, and Glu142. Residues Glu156 and Glu165 contribute to the active site.

Belongs to the class I-like SAM-binding methyltransferase superfamily. Protein arginine N-methyltransferase family. PRMT6 subfamily.

In terms of biological role, arginine methyltransferase that can both catalyze the formation of omega-N monomethylarginine (MMA) and asymmetrical dimethylarginine (aDMA). This chain is Probable protein arginine N-methyltransferase 6.1 (PRMT6.1), found in Oryza sativa subsp. japonica (Rice).